Reading from the N-terminus, the 337-residue chain is Inositol 2-dehydrogenase (337 aa).

This sequence belongs to the Gfo/Idh/MocA family. In terms of assembly, homotetramer.

The catalysed reaction is myo-inositol + NAD(+) = scyllo-inosose + NADH + H(+). In terms of biological role, involved in the oxidation of myo-inositol (MI) to 2-keto-myo-inositol (2KMI or 2-inosose). The polypeptide is Inositol 2-dehydrogenase (Klebsiella pneumoniae subsp. pneumoniae (strain ATCC 700721 / MGH 78578)).